Consider the following 187-residue polypeptide: Elongation factor P (187 aa).

The protein belongs to the elongation factor P family.

The protein resides in the cytoplasm. The protein operates within protein biosynthesis; polypeptide chain elongation. Functionally, involved in peptide bond synthesis. Stimulates efficient translation and peptide-bond synthesis on native or reconstituted 70S ribosomes in vitro. Probably functions indirectly by altering the affinity of the ribosome for aminoacyl-tRNA, thus increasing their reactivity as acceptors for peptidyl transferase. The protein is Elongation factor P of Sphingopyxis alaskensis (strain DSM 13593 / LMG 18877 / RB2256) (Sphingomonas alaskensis).